The following is a 467-amino-acid chain: A-type ATP synthase subunit B (467 aa).

The interval 95–114 is disordered; it reads GKGQPRDHMPLPPPEDFRDV.

This sequence belongs to the ATPase alpha/beta chains family. Has multiple subunits with at least A(3), B(3), C, D, E, F, H, I and proteolipid K(x).

The protein localises to the cell membrane. Its function is as follows. Component of the A-type ATP synthase that produces ATP from ADP in the presence of a proton gradient across the membrane. The B chain is a regulatory subunit. The chain is A-type ATP synthase subunit B from Pyrobaculum neutrophilum (strain DSM 2338 / JCM 9278 / NBRC 100436 / V24Sta) (Thermoproteus neutrophilus).